Reading from the N-terminus, the 640-residue chain is Chaperone protein HtpG (640 aa).

Residues 1 to 352 (MTEQTATQNY…SADLPLNVSR (352 aa)) form an a; substrate-binding region. Residues 353-571 (ELLQESRDVK…DGELSPQLIR (219 aa)) form a b region. The c stretch occupies residues 572–640 (MLKQAGQAVP…VKRINSLLLK (69 aa)).

Belongs to the heat shock protein 90 family. In terms of assembly, homodimer.

It is found in the cytoplasm. Its function is as follows. Molecular chaperone. Has ATPase activity. This is Chaperone protein HtpG from Acinetobacter baylyi (strain ATCC 33305 / BD413 / ADP1).